The primary structure comprises 314 residues: uncharacterized protein (314 aa).

The HTH araC/xylS-type domain maps to 192-289; that stretch reads TEVKLHIKDN…GSSPGLFRSL (98 aa). DNA-binding regions (H-T-H motif) lie at residues 209–230 and 257–279; these read TDVA…AAEL and IKEI…SAKI.

This is an uncharacterized protein from Bacillus subtilis (strain 168).